Reading from the N-terminus, the 349-residue chain is Protein pelota homolog (349 aa).

This sequence belongs to the eukaryotic release factor 1 family. Pelota subfamily. Monomer. Requires a divalent metal cation as cofactor.

The protein localises to the cytoplasm. In terms of biological role, may function in recognizing stalled ribosomes, interact with stem-loop structures in stalled mRNA molecules, and effect endonucleolytic cleavage of the mRNA. May play a role in the release non-functional ribosomes and degradation of damaged mRNAs. Has endoribonuclease activity. The chain is Protein pelota homolog from Nitrosopumilus maritimus (strain SCM1).